A 298-amino-acid chain; its full sequence is Aclacinomycin methylesterase RdmC (298 aa).

The AB hydrolase-1 domain maps to 24-277 (PALLLVMGGN…LAEIPGMGHA (254 aa)). Active-site residues include Ser-102, Asp-248, and His-276.

It belongs to the AB hydrolase superfamily. Hydrolase RdmC family. Monomer.

The catalysed reaction is aclacinomycin T + H2O = 15-demethylaclacinomycin T + methanol. It functions in the pathway antibiotic biosynthesis; aclacinomycin biosynthesis. Involved in the biosynthesis of the anthracycline aclacinomycin which is an aromatic polyketide antibiotic that exhibits high cytotoxicity and is widely applied in the chemotherapy of a variety of cancers. Catalyzes the removal of the methoxy group from the C-15 position of aclacinomycin T and A to yield 15-demethoxyaclacinomycin T and A, respectively. The polypeptide is Aclacinomycin methylesterase RdmC (rdmC) (Streptomyces purpurascens).